Here is a 269-residue protein sequence, read N- to C-terminus: Short-chain dehydrogenase/reductase ABA4 (269 aa).

NADP(+) is bound by residues isoleucine 34, aspartate 80, arginine 144, tyrosine 174, lysine 178, isoleucine 207, and threonine 209. The Proton donor role is filled by tyrosine 174. The Lowers pKa of active site Tyr role is filled by lysine 178.

The protein belongs to the short-chain dehydrogenases/reductases (SDR) family.

The protein operates within hormone biosynthesis. In terms of biological role, short-chain dehydrogenase/reductase involved in the biosynthesis of abscisic acid (ABA), a phytohormone that acts antagonistically toward salicylic acid (SA), jasmonic acid (JA) and ethylene (ETH) signaling, to impede plant defense responses. During pathogen-host interaction, ABA plays a dual role in disease severity by increasing plant susceptibility and accelerating pathogenesis in the fungus itself. The first step of the pathway catalyzes the reaction from farnesyl diphosphate to alpha-ionylideneethane performed by the alpha-ionylideneethane synthase ABA3 via a three-step reaction mechanism involving 2 neutral intermediates, beta-farnesene and allofarnesene. The cytochrome P450 monooxygenase ABA1 might then be involved in the conversion of alpha-ionylideneethane to alpha-ionylideneacetic acid. Alpha-ionylideneacetic acid is further converted to abscisic acid in 2 steps involving the cytochrome P450 monooxygenase ABA2 and the short-chain dehydrogenase/reductase ABA4, via the intermediates 1'-deoxy-ABA or 1',4'-trans-diol-ABA, depending on the order of action of these 2 enzymes. ABA2 is responsible for the hydroxylation of carbon atom C-1' and ABA4 might be involved in the oxidation of the C-4' carbon atom. The chain is Short-chain dehydrogenase/reductase ABA4 (ABA4) from Pyricularia oryzae (strain Y34) (Rice blast fungus).